Here is a 76-residue protein sequence, read N- to C-terminus: Small ribosomal subunit protein bS18 (76 aa).

It belongs to the bacterial ribosomal protein bS18 family. In terms of assembly, part of the 30S ribosomal subunit. Forms a tight heterodimer with protein bS6.

In terms of biological role, binds as a heterodimer with protein bS6 to the central domain of the 16S rRNA, where it helps stabilize the platform of the 30S subunit. This chain is Small ribosomal subunit protein bS18, found in Marinomonas sp. (strain MWYL1).